A 585-amino-acid chain; its full sequence is Cysteine/serine-rich nuclear protein 3 (585 aa).

Disordered regions lie at residues 1 to 52 (MSGI…TPSS) and 335 to 395 (ELDC…GFVE). Residues 30 to 40 (SSESADSGDSV) are compositionally biased toward low complexity. Over residues 41 to 52 (NPSTSSHFTPSS) the composition is skewed to polar residues. Over residues 335 to 349 (ELDCQGEEEEEEEDG) the composition is skewed to acidic residues. Over residues 351–366 (SFCSGVTDSSTQSLAP) the composition is skewed to polar residues. The span at 368–389 (ESDEEEEEEEEEEEEEDDDDDK) shows a compositional bias: acidic residues.

This sequence belongs to the AXUD1 family.

The protein localises to the nucleus. Its function is as follows. Binds to the consensus sequence 5'-AGAGTG-3' and has transcriptional activator activity. Plays a role in apoptosis. The protein is Cysteine/serine-rich nuclear protein 3 (CSRNP3) of Homo sapiens (Human).